The following is a 178-amino-acid chain: Crossover junction endodeoxyribonuclease RuvC (178 aa).

Residues Asp14, Glu73, and Asp145 contribute to the active site. 3 residues coordinate Mg(2+): Asp14, Glu73, and Asp145.

The protein belongs to the RuvC family. Homodimer which binds Holliday junction (HJ) DNA. The HJ becomes 2-fold symmetrical on binding to RuvC with unstacked arms; it has a different conformation from HJ DNA in complex with RuvA. In the full resolvosome a probable DNA-RuvA(4)-RuvB(12)-RuvC(2) complex forms which resolves the HJ. Mg(2+) serves as cofactor.

It localises to the cytoplasm. It catalyses the reaction Endonucleolytic cleavage at a junction such as a reciprocal single-stranded crossover between two homologous DNA duplexes (Holliday junction).. Its function is as follows. The RuvA-RuvB-RuvC complex processes Holliday junction (HJ) DNA during genetic recombination and DNA repair. Endonuclease that resolves HJ intermediates. Cleaves cruciform DNA by making single-stranded nicks across the HJ at symmetrical positions within the homologous arms, yielding a 5'-phosphate and a 3'-hydroxyl group; requires a central core of homology in the junction. The consensus cleavage sequence is 5'-(A/T)TT(C/G)-3'. Cleavage occurs on the 3'-side of the TT dinucleotide at the point of strand exchange. HJ branch migration catalyzed by RuvA-RuvB allows RuvC to scan DNA until it finds its consensus sequence, where it cleaves and resolves the cruciform DNA. This chain is Crossover junction endodeoxyribonuclease RuvC, found in Nitrosomonas eutropha (strain DSM 101675 / C91 / Nm57).